The sequence spans 344 residues: tRNA N6-adenosine threonylcarbamoyltransferase (344 aa).

2 residues coordinate Fe cation: His119 and His123. Residues 141 to 145 (VVSGG), Asp174, Gly187, Asp191, and Asn280 contribute to the substrate site. Asp310 contributes to the Fe cation binding site.

Belongs to the KAE1 / TsaD family. Requires Fe(2+) as cofactor.

It is found in the cytoplasm. The enzyme catalyses L-threonylcarbamoyladenylate + adenosine(37) in tRNA = N(6)-L-threonylcarbamoyladenosine(37) in tRNA + AMP + H(+). Required for the formation of a threonylcarbamoyl group on adenosine at position 37 (t(6)A37) in tRNAs that read codons beginning with adenine. Is involved in the transfer of the threonylcarbamoyl moiety of threonylcarbamoyl-AMP (TC-AMP) to the N6 group of A37, together with TsaE and TsaB. TsaD likely plays a direct catalytic role in this reaction. In Listeria innocua serovar 6a (strain ATCC BAA-680 / CLIP 11262), this protein is tRNA N6-adenosine threonylcarbamoyltransferase.